We begin with the raw amino-acid sequence, 326 residues long: Probable cell division protein WhiA (326 aa).

The H-T-H motif DNA-binding region spans 275-308 (SLDELGHHADPPMTKDAVAGRIRRLLAMADKKAV).

The protein belongs to the WhiA family.

Involved in cell division and chromosome segregation. In Clavibacter sepedonicus (Clavibacter michiganensis subsp. sepedonicus), this protein is Probable cell division protein WhiA.